The following is a 251-amino-acid chain: MLTKRIIPCLDVKDGKTVKGVNFLNLRDAGDPVELGALYSQQGADELVFLDITATLEKRGTLVELVKRVAQHINIPFTIGGGIGSIEDVSACLNAGADKVSVNSSAIKNPALIDQLSKEFGNQCIVVAIDTRNVGGMNLVHSHGGTKPTDLDTIAWAKEMQERGAGELLLTSMDKDGTKAGFANELTAYISTHVSIPIIASGGAGTMEHFTDVFTLGKADAALAASIFHFKEIAIPELKSYLSGKGIHMRK.

Active-site residues include Asp11 and Asp130.

It belongs to the HisA/HisF family. In terms of assembly, heterodimer of HisH and HisF.

It localises to the cytoplasm. It carries out the reaction 5-[(5-phospho-1-deoxy-D-ribulos-1-ylimino)methylamino]-1-(5-phospho-beta-D-ribosyl)imidazole-4-carboxamide + L-glutamine = D-erythro-1-(imidazol-4-yl)glycerol 3-phosphate + 5-amino-1-(5-phospho-beta-D-ribosyl)imidazole-4-carboxamide + L-glutamate + H(+). It functions in the pathway amino-acid biosynthesis; L-histidine biosynthesis; L-histidine from 5-phospho-alpha-D-ribose 1-diphosphate: step 5/9. Functionally, IGPS catalyzes the conversion of PRFAR and glutamine to IGP, AICAR and glutamate. The HisF subunit catalyzes the cyclization activity that produces IGP and AICAR from PRFAR using the ammonia provided by the HisH subunit. The sequence is that of Imidazole glycerol phosphate synthase subunit HisF from Cytophaga hutchinsonii (strain ATCC 33406 / DSM 1761 / CIP 103989 / NBRC 15051 / NCIMB 9469 / D465).